Consider the following 474-residue polypeptide: Cyclin-dependent kinase 18 (474 aa).

Residues Ser14, Ser74, Ser89, Ser98, Ser117, and Ser132 each carry the phosphoserine modification. Residues 44–93 (NLQLGPLGRDPPQECSTFSPTDSGEEPGQLSPGVQFQRRQNQRRFSMEDV) form a disordered region. The 282-residue stretch at 144–425 (YVKLDKLGEG…AEAALSHSYF (282 aa)) folds into the Protein kinase domain. ATP-binding positions include 150-158 (LGEGTYATV) and Lys173. Asp265 acts as the Proton acceptor in catalysis. A phosphoserine mark is found at Ser440 and Ser443.

Belongs to the protein kinase superfamily. CMGC Ser/Thr protein kinase family. CDC2/CDKX subfamily. In terms of tissue distribution, isoform 2 expression is limited to several subcortical nuclei of the basal gangli and the spinal cord. Isoform 1 is widely expressed.

It catalyses the reaction L-seryl-[protein] + ATP = O-phospho-L-seryl-[protein] + ADP + H(+). The enzyme catalyses L-threonyl-[protein] + ATP = O-phospho-L-threonyl-[protein] + ADP + H(+). In terms of biological role, may play a role in signal transduction cascades in terminally differentiated cells. This Homo sapiens (Human) protein is Cyclin-dependent kinase 18 (CDK18).